A 121-amino-acid polypeptide reads, in one-letter code: MNAVLSVQGASAPVKKKSFFSKFTRLNMLRLARAVIPAAVLMMFFPQLAMAAGSSGQDLMASGNTTVKATFGKDSSVVKWVVLAEVLVGAVMYMMTKNVKFLAGFAIISVFIAVGMAVVGL.

Residues 1-51 (MNAVLSVQGASAPVKKKSFFSKFTRLNMLRLARAVIPAAVLMMFFPQLAMA) constitute a propeptide, leader peptide; cleaved by LepB. Topologically, residues 1 to 75 (MNAVLSVQGA…TVKATFGKDS (75 aa)) are periplasmic. Residue Ala52 is modified to N-acetylalanine. Residues 76 to 96 (SVVKWVVLAEVLVGAVMYMMT) traverse the membrane as a helical segment. Residues 97–100 (KNVK) are Cytoplasmic-facing. Residues 101-121 (FLAGFAIISVFIAVGMAVVGL) traverse the membrane as a helical segment.

It belongs to the TraA family. As to quaternary structure, monomer. Interacts with itself to form filaments; also interacts with TraQ.

It localises to the cell inner membrane. The protein resides in the secreted. Its function is as follows. Propilin is the precursor of the pilus subunit, pilin, that forms conjugative pili, the filamentous surface appendages required for cell-to-cell contact during the earlier stages of bacterial conjugation, and that retract after contact is established. Mature pilin is assembled with the help of TraQ and TraX. Functions as a receptor for CdiA-CT from E.cloacae and E.coli, although it is not clear if this is physiologically relevant. The chain is Pilin (traA) from Escherichia coli (strain K12).